The following is a 1038-amino-acid chain: Translation initiation factor IF-2 (1038 aa).

The segment at 32–442 is disordered; it reads GSALASLSDE…RKGVNTAAPR (411 aa). Low complexity-rich tracts occupy residues 65–77, 100–113, and 131–147; these read PPTK…PVAP, PAEA…PAQP, and PKLA…APAA. Composition is skewed to basic and acidic residues over residues 204-217 and 275-295; these read SGGR…KRES and RSLD…DAGK. Low complexity predominate over residues 311–328; sequence PSAPAKPAAPTGSSGPAA. Basic and acidic residues predominate over residues 331 to 344; the sequence is PDIKLTRDVIEGHK. Over residues 422 to 435 the composition is skewed to basic residues; that stretch reads HHYRRSRPRIRRKG. Residues 529–696 form the tr-type G domain; it reads ARPPVVTFLG…TLLTIAELNE (168 aa). Residues 538–545 form a G1 region; it reads GHVDHGKT. 538 to 545 contacts GTP; that stretch reads GHVDHGKT. Positions 563 to 567 are G2; the sequence is GITQH. A G3 region spans residues 584-587; sequence DTPG. GTP-binding positions include 584-588 and 638-641; these read DTPGH and NKID. The segment at 638–641 is G4; sequence NKID. The interval 674–676 is G5; that stretch reads SAT.

The protein belongs to the TRAFAC class translation factor GTPase superfamily. Classic translation factor GTPase family. IF-2 subfamily.

The protein resides in the cytoplasm. Functionally, one of the essential components for the initiation of protein synthesis. Protects formylmethionyl-tRNA from spontaneous hydrolysis and promotes its binding to the 30S ribosomal subunits. Also involved in the hydrolysis of GTP during the formation of the 70S ribosomal complex. The chain is Translation initiation factor IF-2 from Rhodopirellula baltica (strain DSM 10527 / NCIMB 13988 / SH1).